Reading from the N-terminus, the 361-residue chain is DNA replication and repair protein RecF (361 aa).

30 to 37 (GPNGSGKT) serves as a coordination point for ATP.

It belongs to the RecF family.

It is found in the cytoplasm. Its function is as follows. The RecF protein is involved in DNA metabolism; it is required for DNA replication and normal SOS inducibility. RecF binds preferentially to single-stranded, linear DNA. It also seems to bind ATP. This chain is DNA replication and repair protein RecF, found in Yersinia pseudotuberculosis serotype O:1b (strain IP 31758).